Reading from the N-terminus, the 129-residue chain is Fluoride-specific ion channel FluC 2 (129 aa).

Helical transmembrane passes span 9–29, 37–57, 74–94, and 100–120; these read LGTL…RYLL, GTIL…YYVI, MVGA…LSTF, and YLLI…ILGI. Residues Gly76 and Thr79 each coordinate Na(+).

Belongs to the fluoride channel Fluc/FEX (TC 1.A.43) family.

It localises to the cell membrane. The enzyme catalyses fluoride(in) = fluoride(out). Na(+) is not transported, but it plays an essential structural role and its presence is essential for fluoride channel function. Fluoride-specific ion channel. Important for reducing fluoride concentration in the cell, thus reducing its toxicity. This is Fluoride-specific ion channel FluC 2 from Ligilactobacillus salivarius (strain UCC118) (Lactobacillus salivarius).